Consider the following 576-residue polypeptide: Glutamine--tRNA ligase (576 aa).

A 'HIGH' region motif is present at residues 47-57 (PEPNGYLHIGH). ATP-binding positions include 48 to 50 (EPN) and 54 to 60 (HIGHAKS). Residues Asp80 and Tyr229 each coordinate L-glutamine. ATP-binding positions include Thr248 and 283 to 284 (RL). A 'KMSKS' region motif is present at residues 290-294 (ITSKR).

It belongs to the class-I aminoacyl-tRNA synthetase family. As to quaternary structure, monomer.

The protein localises to the cytoplasm. It carries out the reaction tRNA(Gln) + L-glutamine + ATP = L-glutaminyl-tRNA(Gln) + AMP + diphosphate. The protein is Glutamine--tRNA ligase of Ralstonia pickettii (strain 12J).